Reading from the N-terminus, the 600-residue chain is Putative DNA 3'-5' helicase Rad25 (600 aa).

The Helicase ATP-binding domain maps to 253 to 402 (VDRFEDASAG…DIYTLVGRPI (150 aa)). 266 to 273 (GPPGSGKT) lines the ATP pocket. The DEAH box motif lies at 356-359 (DEVH). The 144-residue stretch at 457–600 (EIEHLVDQHG…VTESDASHSP (144 aa)) folds into the Helicase C-terminal domain. The tract at residues 569–600 (RGTEEEDHARSRMRHLSTKGVRVTESDASHSP) is disordered. Positions 590 to 600 (RVTESDASHSP) are enriched in basic and acidic residues.

Belongs to the helicase family. RAD25/XPB subfamily.

The enzyme catalyses Couples ATP hydrolysis with the unwinding of duplex DNA by translocating in the 3'-5' direction.. It catalyses the reaction ATP + H2O = ADP + phosphate + H(+). The sequence is that of Putative DNA 3'-5' helicase Rad25 from Halobacterium salinarum (strain ATCC 700922 / JCM 11081 / NRC-1) (Halobacterium halobium).